Consider the following 480-residue polypeptide: Protein nucleotidyltransferase YdiU (480 aa).

Gly86, Gly88, Arg89, Lys109, Asp121, Gly122, Arg172, and Arg179 together coordinate ATP. The active-site Proton acceptor is Asp248. 2 residues coordinate Mg(2+): Asn249 and Asp258. Asp258 contributes to the ATP binding site.

The protein belongs to the SELO family. Requires Mg(2+) as cofactor. Mn(2+) is required as a cofactor.

It carries out the reaction L-seryl-[protein] + ATP = 3-O-(5'-adenylyl)-L-seryl-[protein] + diphosphate. It catalyses the reaction L-threonyl-[protein] + ATP = 3-O-(5'-adenylyl)-L-threonyl-[protein] + diphosphate. The catalysed reaction is L-tyrosyl-[protein] + ATP = O-(5'-adenylyl)-L-tyrosyl-[protein] + diphosphate. The enzyme catalyses L-histidyl-[protein] + UTP = N(tele)-(5'-uridylyl)-L-histidyl-[protein] + diphosphate. It carries out the reaction L-seryl-[protein] + UTP = O-(5'-uridylyl)-L-seryl-[protein] + diphosphate. It catalyses the reaction L-tyrosyl-[protein] + UTP = O-(5'-uridylyl)-L-tyrosyl-[protein] + diphosphate. Nucleotidyltransferase involved in the post-translational modification of proteins. It can catalyze the addition of adenosine monophosphate (AMP) or uridine monophosphate (UMP) to a protein, resulting in modifications known as AMPylation and UMPylation. This chain is Protein nucleotidyltransferase YdiU, found in Salmonella choleraesuis (strain SC-B67).